Reading from the N-terminus, the 361-residue chain is Histidinol-phosphate aminotransferase (361 aa).

Position 219 is an N6-(pyridoxal phosphate)lysine (Lys-219).

Belongs to the class-II pyridoxal-phosphate-dependent aminotransferase family. Histidinol-phosphate aminotransferase subfamily. In terms of assembly, homodimer. Pyridoxal 5'-phosphate is required as a cofactor.

It catalyses the reaction L-histidinol phosphate + 2-oxoglutarate = 3-(imidazol-4-yl)-2-oxopropyl phosphate + L-glutamate. It participates in amino-acid biosynthesis; L-histidine biosynthesis; L-histidine from 5-phospho-alpha-D-ribose 1-diphosphate: step 7/9. In Acinetobacter baylyi (strain ATCC 33305 / BD413 / ADP1), this protein is Histidinol-phosphate aminotransferase.